The chain runs to 151 residues: Ribosome maturation factor RimP (151 aa).

Belongs to the RimP family.

Its subcellular location is the cytoplasm. Required for maturation of 30S ribosomal subunits. The polypeptide is Ribosome maturation factor RimP (Haemophilus influenzae (strain PittGG)).